The following is a 108-amino-acid chain: Nucleoid-associated protein Bpet3552 (108 aa).

It belongs to the YbaB/EbfC family. In terms of assembly, homodimer.

It is found in the cytoplasm. Its subcellular location is the nucleoid. Functionally, binds to DNA and alters its conformation. May be involved in regulation of gene expression, nucleoid organization and DNA protection. The polypeptide is Nucleoid-associated protein Bpet3552 (Bordetella petrii (strain ATCC BAA-461 / DSM 12804 / CCUG 43448)).